Consider the following 589-residue polypeptide: Kelch-like protein 25 (589 aa).

Residues 46–114 (TDVTLWAGNR…AYSSKIIINE (69 aa)) form the BTB domain. Residues 149–250 (CLGMMILSDA…LPSELLKEAV (102 aa)) enclose the BACK domain. Kelch repeat units lie at residues 296–340 (TLLI…AIGC), 341–388 (KVYV…ELEN), 389–444 (CLYV…SAKL), 446–492 (LFAF…VLGS), 493–538 (QIFI…ASGN), and 539–585 (KVYV…STWK).

Component of the BCR(KLHL25) E3 ubiquitin ligase complex, at least composed of cul3, klhl25 and rbx1.

It participates in protein modification; protein ubiquitination. Its function is as follows. Substrate-specific adapter of a BCR (BTB-CUL3-RBX1) E3 ubiquitin ligase complex involved in various processes, such as translation homeostasis and lipid synthesis. The BCR(KLHL25) ubiquitin ligase complex acts by mediating ubiquitination of hypophosphorylated eif4ebp1 (4E-BP1): ubiquitination and subsequent degradation of hypophosphorylated EIF4EBP1 (4E-BP1) probably serves as a homeostatic mechanism to maintain translation and prevent eIF4E inhibition when eIF4E levels are low. The BCR(KLHL25) complex also acts as a regulator of lipid synthesis by mediating ubiquitination and degradation of ACLY, thereby inhibiting lipid synthesis. This Xenopus tropicalis (Western clawed frog) protein is Kelch-like protein 25.